The sequence spans 582 residues: ATP-dependent lipid A-core flippase (582 aa).

The next 5 membrane-spanning stretches (helical) occupy residues 16–36 (LWPT…ALIL), 64–84 (LMWM…TSYI), 153–173 (IIGL…ILIV), 253–273 (PIIQ…ASFP), and 275–295 (VMDS…IALM). Residues 28-310 (IVAGVALILN…LTNVNAQFQR (283 aa)) enclose the ABC transmembrane type-1 domain. The ABC transporter domain maps to 342–578 (VEFRNVTFTY…RGVYAQLHKM (237 aa)). 376 to 383 (GRSGSGKS) serves as a coordination point for ATP.

Belongs to the ABC transporter superfamily. Lipid exporter (TC 3.A.1.106) family. Homodimer.

It localises to the cell inner membrane. It catalyses the reaction ATP + H2O + lipid A-core oligosaccharideSide 1 = ADP + phosphate + lipid A-core oligosaccharideSide 2.. Functionally, involved in lipopolysaccharide (LPS) biosynthesis. Translocates lipid A-core from the inner to the outer leaflet of the inner membrane. Transmembrane domains (TMD) form a pore in the inner membrane and the ATP-binding domain (NBD) is responsible for energy generation. In Escherichia coli O6:K15:H31 (strain 536 / UPEC), this protein is ATP-dependent lipid A-core flippase.